The chain runs to 562 residues: MRSDMIKKGDHQAPARSLLHATGALKQPTDMNKPFVAICNSYIDIVPGHVHLRELADIAKEAIREAGAIPFEFNTIGVDDGIAMGHIGMRYSLPSREIIADAAETVINAHWFDGVFYIPNCDKITPGMLLAAVRTNVPAIFCSGGPMKAGLSAQGKALTLSSMFEAVGAFKEGTISKEAFLDMEQNACPTCGSCAGMFTANSMNCLMEVLGLALPYNGTALAVSDQRREMIRQAAFRLVENIKNDIKPRDIITQDAIDDAFALDMAMGGSTNTVLHTLAIANEAGIDYDLERINEIAKKTPYLSKIAPSSSYSMHDVHEAGGVPAIINELMKKDGTLHPDRLTVTGKTLRENNEGKNIKNFDVIHPLENPYDKQGGLSVLFGNLAPKGAVIKVGGVDPSIKVFTGKAICFNSHDEAVEAIDNHTVREGHVVVIRYEGPKGGPGMPEMLAPTSSIVGRGLGKDVALITDGRFSGATRGIAVGHISPEAASGGPIGLIRDGDKITIDLINRTLNVNQSEEELYRRKNQLEPFRAKVKTGYLARYTSLVTSANTGGIMQVPENLI.

Position 80 (Asp80) interacts with Mg(2+). Cys121 serves as a coordination point for [2Fe-2S] cluster. Mg(2+) is bound by residues Asp122 and Lys123. At Lys123 the chain carries N6-carboxylysine. Cys194 contacts [2Fe-2S] cluster. A Mg(2+)-binding site is contributed by Glu446. Ser472 acts as the Proton acceptor in catalysis.

It belongs to the IlvD/Edd family. Homodimer. Requires [2Fe-2S] cluster as cofactor. The cofactor is Mg(2+).

The catalysed reaction is (2R)-2,3-dihydroxy-3-methylbutanoate = 3-methyl-2-oxobutanoate + H2O. It carries out the reaction (2R,3R)-2,3-dihydroxy-3-methylpentanoate = (S)-3-methyl-2-oxopentanoate + H2O. The protein operates within amino-acid biosynthesis; L-isoleucine biosynthesis; L-isoleucine from 2-oxobutanoate: step 3/4. It participates in amino-acid biosynthesis; L-valine biosynthesis; L-valine from pyruvate: step 3/4. In terms of biological role, functions in the biosynthesis of branched-chain amino acids. Catalyzes the dehydration of (2R,3R)-2,3-dihydroxy-3-methylpentanoate (2,3-dihydroxy-3-methylvalerate) into 2-oxo-3-methylpentanoate (2-oxo-3-methylvalerate) and of (2R)-2,3-dihydroxy-3-methylbutanoate (2,3-dihydroxyisovalerate) into 2-oxo-3-methylbutanoate (2-oxoisovalerate), the penultimate precursor to L-isoleucine and L-valine, respectively. In Staphylococcus epidermidis (strain ATCC 35984 / DSM 28319 / BCRC 17069 / CCUG 31568 / BM 3577 / RP62A), this protein is Dihydroxy-acid dehydratase.